Consider the following 545-residue polypeptide: 4-coumarate--CoA ligase 1 (545 aa).

ATP contacts are provided by Ser192, Ser193, Gly194, Thr195, Thr196, and Lys200. (E)-4-coumaroyl-AMP contacts are provided by Tyr242 and Ser246. A CoA-binding site is contributed by Lys263. Positions 265-334 (DIAQFLELIP…AKFPNAKLGQ (70 aa)) are SBD1. Positions 312, 334, 335, 339, and 347 each coordinate (E)-4-coumaroyl-AMP. Positions 334, 335, and 339 each coordinate ATP. The tract at residues 335–402 (GYGMTEAGPV…IRGDQIMKGY (68 aa)) is SBD2. ATP-binding residues include Asp423 and Arg438. 2 residues coordinate (E)-4-coumaroyl-AMP: Lys440 and Lys444. CoA-binding residues include Lys446 and Gly447. Lys529 provides a ligand contact to ATP.

This sequence belongs to the ATP-dependent AMP-binding enzyme family. Mg(2+) serves as cofactor.

It carries out the reaction (E)-4-coumarate + ATP + CoA = (E)-4-coumaroyl-CoA + AMP + diphosphate. The enzyme catalyses (E)-4-coumarate + ATP + H(+) = (E)-4-coumaroyl-AMP + diphosphate. It catalyses the reaction (E)-4-coumaroyl-AMP + CoA = (E)-4-coumaroyl-CoA + AMP + H(+). The protein operates within phytoalexin biosynthesis; 3,4',5-trihydroxystilbene biosynthesis; 3,4',5-trihydroxystilbene from trans-4-coumarate: step 1/2. In terms of biological role, carboxylate--CoA ligase that may use 4-coumarate as substrate. Follows a two-step reaction mechanism, wherein the carboxylate substrate first undergoes adenylation by ATP, followed by a thioesterification in the presence of CoA to yield the final CoA thioester. The protein is 4-coumarate--CoA ligase 1 (4CL1) of Solanum tuberosum (Potato).